The sequence spans 388 residues: Pyruvate dehydrogenase E1 component subunit alpha, testis-specific form, mitochondrial (388 aa).

A mitochondrion-targeting transit peptide spans 1–27; sequence MLAAFISRVLRRVAQKSARRVLVASRN. Residues histidine 90, tyrosine 116, arginine 117, glycine 163, valine 165, aspartate 194, glycine 195, alanine 196, asparagine 223, and tyrosine 225 each coordinate pyruvate. Thiamine diphosphate-binding residues include tyrosine 116, arginine 117, glycine 163, valine 165, aspartate 194, glycine 195, alanine 196, and asparagine 223. Aspartate 194 contributes to the Mg(2+) binding site. Asparagine 223 and tyrosine 225 together coordinate Mg(2+). Histidine 290 is a thiamine diphosphate binding site. A Phosphoserine; by PDK1, PDK2, PDK3 and PDK4 modification is found at serine 291. A Phosphoserine modification is found at serine 293. The residue at position 298 (serine 298) is a Phosphoserine; by PDK3.

In terms of assembly, heterotetramer of two PDHA2 and two PDHB subunits. The heterotetramer interacts with DLAT, and is part of the multimeric pyruvate dehydrogenase complex that contains multiple copies of pyruvate dehydrogenase (E1), dihydrolipoamide acetyltransferase (DLAT, E2) and lipoamide dehydrogenase (DLD, E3). These subunits are bound to an inner core composed of about 48 DLAT and 12 PDHX molecules. The cofactor is thiamine diphosphate. It depends on Mg(2+) as a cofactor. Post-translationally, phosphorylation at Ser-291, Ser-293 and Ser-298 by PDK family kinases inactivates the enzyme; for this phosphorylation at a single site is sufficient. Phosphorylation at Ser-293 interferes with access to active site, and thereby inactivates the enzyme. Dephosphorylation at all three sites, i.e. at Ser-291, Ser-293 and Ser-298, is required for reactivation. As to expression, testis. Expressed in postmeiotic spermatogenic cells.

It is found in the mitochondrion matrix. The enzyme catalyses N(6)-[(R)-lipoyl]-L-lysyl-[protein] + pyruvate + H(+) = N(6)-[(R)-S(8)-acetyldihydrolipoyl]-L-lysyl-[protein] + CO2. Its activity is regulated as follows. Pyruvate dehydrogenase activity is inhibited by phosphorylation of PDHA2; it is reactivated by dephosphorylation. Functionally, the pyruvate dehydrogenase complex catalyzes the overall conversion of pyruvate to acetyl-CoA and CO(2), and thereby links the glycolytic pathway to the tricarboxylic cycle. The chain is Pyruvate dehydrogenase E1 component subunit alpha, testis-specific form, mitochondrial (PDHA2) from Homo sapiens (Human).